The primary structure comprises 212 residues: Riboflavin kinase (212 aa).

Positions 1 to 87 (MKKSNLDLLI…HEELSDALYR (87 aa)) are H-T-H motif-like. Residues 88–212 (GIIIGEVVSG…DGDRIRIKTL (125 aa)) form a riboflavin kinase region. 97 to 102 (GIGEGA) contributes to the CDP binding site. The Mg(2+) site is built by threonine 124 and asparagine 126. The FMN site is built by threonine 180 and glutamate 188. Position 193–196 (193–196 (VNLR)) interacts with CDP.

The protein belongs to the archaeal riboflavin kinase family. The cofactor is Mg(2+).

It catalyses the reaction riboflavin + CTP = CDP + FMN + H(+). It participates in cofactor biosynthesis; FMN biosynthesis; FMN from riboflavin (CTP route): step 1/1. In terms of biological role, catalyzes the CTP-dependent phosphorylation of riboflavin (vitamin B2) to form flavin mononucleotide (FMN). The sequence is that of Riboflavin kinase (ribK) from Pyrococcus furiosus (strain ATCC 43587 / DSM 3638 / JCM 8422 / Vc1).